The sequence spans 179 residues: Large ribosomal subunit protein uL6 (179 aa).

Belongs to the universal ribosomal protein uL6 family. Part of the 50S ribosomal subunit.

This protein binds to the 23S rRNA, and is important in its secondary structure. It is located near the subunit interface in the base of the L7/L12 stalk, and near the tRNA binding site of the peptidyltransferase center. This is Large ribosomal subunit protein uL6 from Bifidobacterium animalis subsp. lactis (strain AD011).